Reading from the N-terminus, the 554-residue chain is Germacrene A synthase (554 aa).

Residues D306, D310, T453, and E457 each coordinate Mg(2+). The DDXXD motif motif lies at 306–310 (DDTYD).

The protein belongs to the terpene synthase family. Requires Mg(2+) as cofactor.

Its subcellular location is the cytoplasm. It localises to the cytosol. It catalyses the reaction (2E,6E)-farnesyl diphosphate = (+)-(R)-germacrene A + diphosphate. Its pathway is secondary metabolite biosynthesis; terpenoid biosynthesis. Sesquiterpene synthase involved in germacrene A biosynthesis. Also produces additional sesquiterpene products, including 4,5-di-epi-aristolochene, eremophilene, alpha-selinene. The protein is Germacrene A synthase of Pogostemon cablin (Patchouli).